The sequence spans 383 residues: Protein RecA (383 aa).

79-86 contributes to the ATP binding site; it reads GPESSGKT.

It belongs to the RecA family.

The protein localises to the cytoplasm. Can catalyze the hydrolysis of ATP in the presence of single-stranded DNA, the ATP-dependent uptake of single-stranded DNA by duplex DNA, and the ATP-dependent hybridization of homologous single-stranded DNAs. It interacts with LexA causing its activation and leading to its autocatalytic cleavage. The sequence is that of Protein RecA from Streptococcus gordonii (strain Challis / ATCC 35105 / BCRC 15272 / CH1 / DL1 / V288).